Here is a 290-residue protein sequence, read N- to C-terminus: 4-hydroxy-3-methylbut-2-enyl diphosphate reductase (290 aa).

Cysteine 13 is a [4Fe-4S] cluster binding site. (2E)-4-hydroxy-3-methylbut-2-enyl diphosphate-binding residues include histidine 41 and histidine 75. 2 residues coordinate dimethylallyl diphosphate: histidine 41 and histidine 75. The isopentenyl diphosphate site is built by histidine 41 and histidine 75. Cysteine 97 is a binding site for [4Fe-4S] cluster. Histidine 129 is a (2E)-4-hydroxy-3-methylbut-2-enyl diphosphate binding site. Histidine 129 serves as a coordination point for dimethylallyl diphosphate. Histidine 129 provides a ligand contact to isopentenyl diphosphate. The Proton donor role is filled by glutamate 131. Threonine 167 serves as a coordination point for (2E)-4-hydroxy-3-methylbut-2-enyl diphosphate. Cysteine 198 is a binding site for [4Fe-4S] cluster. Residues serine 226, serine 227, asparagine 228, and serine 270 each coordinate (2E)-4-hydroxy-3-methylbut-2-enyl diphosphate. Residues serine 226, serine 227, asparagine 228, and serine 270 each contribute to the dimethylallyl diphosphate site. The isopentenyl diphosphate site is built by serine 226, serine 227, asparagine 228, and serine 270.

Belongs to the IspH family. [4Fe-4S] cluster serves as cofactor.

The enzyme catalyses isopentenyl diphosphate + 2 oxidized [2Fe-2S]-[ferredoxin] + H2O = (2E)-4-hydroxy-3-methylbut-2-enyl diphosphate + 2 reduced [2Fe-2S]-[ferredoxin] + 2 H(+). It catalyses the reaction dimethylallyl diphosphate + 2 oxidized [2Fe-2S]-[ferredoxin] + H2O = (2E)-4-hydroxy-3-methylbut-2-enyl diphosphate + 2 reduced [2Fe-2S]-[ferredoxin] + 2 H(+). It functions in the pathway isoprenoid biosynthesis; dimethylallyl diphosphate biosynthesis; dimethylallyl diphosphate from (2E)-4-hydroxy-3-methylbutenyl diphosphate: step 1/1. It participates in isoprenoid biosynthesis; isopentenyl diphosphate biosynthesis via DXP pathway; isopentenyl diphosphate from 1-deoxy-D-xylulose 5-phosphate: step 6/6. Catalyzes the conversion of 1-hydroxy-2-methyl-2-(E)-butenyl 4-diphosphate (HMBPP) into a mixture of isopentenyl diphosphate (IPP) and dimethylallyl diphosphate (DMAPP). Acts in the terminal step of the DOXP/MEP pathway for isoprenoid precursor biosynthesis. The protein is 4-hydroxy-3-methylbut-2-enyl diphosphate reductase of Parabacteroides distasonis (strain ATCC 8503 / DSM 20701 / CIP 104284 / JCM 5825 / NCTC 11152).